Consider the following 582-residue polypeptide: Probable inorganic phosphate transporter 1-9 (582 aa).

The Cytoplasmic portion of the chain corresponds to methionine 1–alanine 23. A helical transmembrane segment spans residues isoleucine 24–valine 44. Residues methionine 45–serine 75 are Extracellular-facing. A helical transmembrane segment spans residues alanine 76–glycine 96. Residues aspartate 97–arginine 103 are Cytoplasmic-facing. A helical membrane pass occupies residues valine 104–cysteine 124. Residues arginine 125–alanine 130 lie on the Extracellular side of the membrane. Residues leucine 131 to leucine 151 form a helical membrane-spanning segment. Over serine 152–arginine 165 the chain is Cytoplasmic. Residues glycine 166–valine 186 traverse the membrane as a helical segment. Residues threonine 187 to alanine 210 lie on the Extracellular side of the membrane. A helical transmembrane segment spans residues aspartate 211–tryptophan 231. The Cytoplasmic segment spans residues arginine 232 to aspartate 307. Residues leucine 308–phenylalanine 328 form a helical membrane-spanning segment. Residues glutamine 329–lysine 354 are Extracellular-facing. The helical transmembrane segment at phenylalanine 355–isoleucine 375 threads the bilayer. The Cytoplasmic portion of the chain corresponds to glutamate 376–methionine 385. The chain crosses the membrane as a helical span at residues alanine 386–tryptophan 406. The Extracellular portion of the chain corresponds to arginine 407–tyrosine 415. A helical membrane pass occupies residues isoleucine 416–isoleucine 436. Topologically, residues leucine 437–histidine 451 are cytoplasmic. The chain crosses the membrane as a helical span at residues glycine 452 to alanine 472. Over serine 473–proline 485 the chain is Extracellular. A helical membrane pass occupies residues glycine 486–leucine 506. Topologically, residues threonine 507–leucine 582 are cytoplasmic. The disordered stretch occupies residues leucine 519–asparagine 541.

Belongs to the major facilitator superfamily. Phosphate:H(+) symporter (TC 2.A.1.9) family. Expressed at low levels in roots.

The protein localises to the membrane. High-affinity transporter for external inorganic phosphate. The protein is Probable inorganic phosphate transporter 1-9 (PHT1-9) of Oryza sativa subsp. japonica (Rice).